The sequence spans 194 residues: dCTP deaminase (194 aa).

Residues 110–115, D128, 136–138, Y171, K178, and Q182 each bind dCTP; these read RSSLAR and VLE. E138 (proton donor/acceptor) is an active-site residue.

This sequence belongs to the dCTP deaminase family. As to quaternary structure, homotrimer.

The catalysed reaction is dCTP + H2O + H(+) = dUTP + NH4(+). The protein operates within pyrimidine metabolism; dUMP biosynthesis; dUMP from dCTP (dUTP route): step 1/2. Its function is as follows. Catalyzes the deamination of dCTP to dUTP. The sequence is that of dCTP deaminase from Pasteurella multocida (strain Pm70).